The following is a 230-amino-acid chain: Orotidine 5'-phosphate decarboxylase (230 aa).

Residues Asp10, Lys32, 59–68 (DLKLHDIPNT), Thr118, Arg179, Gln188, Gly208, and Arg209 contribute to the substrate site. Lys61 functions as the Proton donor in the catalytic mechanism.

It belongs to the OMP decarboxylase family. Type 1 subfamily. In terms of assembly, homodimer.

The catalysed reaction is orotidine 5'-phosphate + H(+) = UMP + CO2. It participates in pyrimidine metabolism; UMP biosynthesis via de novo pathway; UMP from orotate: step 2/2. Functionally, catalyzes the decarboxylation of orotidine 5'-monophosphate (OMP) to uridine 5'-monophosphate (UMP). The polypeptide is Orotidine 5'-phosphate decarboxylase (Opitutus terrae (strain DSM 11246 / JCM 15787 / PB90-1)).